Reading from the N-terminus, the 455-residue chain is Adenylyltransferase and sulfurtransferase MOCS3 (455 aa).

ATP contacts are provided by residues Gly-90, Asp-111, 118–122 (SNLAR), Lys-135, and 179–180 (DN). Residues 156–236 (AQALTPATAL…QPPPAETVTN (81 aa)) are interaction with NFS1. Residues Cys-220 and Cys-223 each contribute to the Zn(2+) site. Catalysis depends on Cys-237, which acts as the Glycyl thioester intermediate; for adenylyltransferase activity. Residues Cys-295 and Cys-298 each coordinate Zn(2+). A disulfide bridge links Cys-314 with Cys-322. Residues 345–453 (SGSPHLLLDV…WAAKVDGTFP (109 aa)) form the Rhodanese domain. Residue Cys-410 is the Cysteine persulfide intermediate; for sulfurtransferase activity of the active site. Cys-410 carries the post-translational modification Cysteine persulfide.

In the N-terminal section; belongs to the HesA/MoeB/ThiF family. UBA4 subfamily. Interacts with NFS1. Zn(2+) is required as a cofactor.

It is found in the cytoplasm. The protein localises to the cytosol. It carries out the reaction [molybdopterin-synthase sulfur-carrier protein]-C-terminal Gly-Gly + ATP + H(+) = [molybdopterin-synthase sulfur-carrier protein]-C-terminal Gly-Gly-AMP + diphosphate. The enzyme catalyses [molybdopterin-synthase sulfur-carrier protein]-C-terminal Gly-Gly-AMP + S-sulfanyl-L-cysteinyl-[cysteine desulfurase] + AH2 = [molybdopterin-synthase sulfur-carrier protein]-C-terminal-Gly-aminoethanethioate + L-cysteinyl-[cysteine desulfurase] + A + AMP + 2 H(+). It functions in the pathway tRNA modification; 5-methoxycarbonylmethyl-2-thiouridine-tRNA biosynthesis. It participates in cofactor biosynthesis; molybdopterin biosynthesis. Its function is as follows. Plays a central role in 2-thiolation of mcm(5)S(2)U at tRNA wobble positions of cytosolic tRNA(Lys), tRNA(Glu) and tRNA(Gln). Also essential during biosynthesis of the molybdenum cofactor. Acts by mediating the C-terminal thiocarboxylation of sulfur carriers URM1 and MOCS2A. Its N-terminus first activates URM1 and MOCS2A as acyl-adenylates (-COAMP), then the persulfide sulfur on the catalytic cysteine is transferred to URM1 and MOCS2A to form thiocarboxylation (-COSH) of their C-terminus. The reaction probably involves hydrogen sulfide that is generated from the persulfide intermediate and that acts as a nucleophile towards URM1 and MOCS2A. Subsequently, a transient disulfide bond is formed. Does not use thiosulfate as sulfur donor; NFS1 acting as a sulfur donor for thiocarboxylation reactions. In Sus scrofa (Pig), this protein is Adenylyltransferase and sulfurtransferase MOCS3.